The sequence spans 386 residues: Succinate--CoA ligase [ADP-forming] subunit beta (386 aa).

4 residues coordinate ATP: Lys46, Glu99, Ala102, and Glu107. Mg(2+)-binding residues include Asn199 and Asp213. Substrate contacts are provided by residues Asn264 and 321-323; that span reads GIM.

This sequence belongs to the succinate/malate CoA ligase beta subunit family. Heterotetramer of two alpha and two beta subunits. It depends on Mg(2+) as a cofactor.

It carries out the reaction succinate + ATP + CoA = succinyl-CoA + ADP + phosphate. The enzyme catalyses GTP + succinate + CoA = succinyl-CoA + GDP + phosphate. Its pathway is carbohydrate metabolism; tricarboxylic acid cycle; succinate from succinyl-CoA (ligase route): step 1/1. Succinyl-CoA synthetase functions in the citric acid cycle (TCA), coupling the hydrolysis of succinyl-CoA to the synthesis of either ATP or GTP and thus represents the only step of substrate-level phosphorylation in the TCA. The beta subunit provides nucleotide specificity of the enzyme and binds the substrate succinate, while the binding sites for coenzyme A and phosphate are found in the alpha subunit. The chain is Succinate--CoA ligase [ADP-forming] subunit beta from Orientia tsutsugamushi (strain Boryong) (Rickettsia tsutsugamushi).